The sequence spans 1276 residues: Receptor-type guanylate cyclase gcy-28 (1276 aa).

Positions 1 to 18 are cleaved as a signal peptide; that stretch reads MLRWLTLLSCILLTALHG. Over 19–515 the chain is Extracellular; it reads NIVEDVGAAQ…KSKCPGYPLH (497 aa). N-linked (GlcNAc...) asparagine glycosylation is found at N87, N196, N338, N384, N387, N414, N428, and N444. A helical membrane pass occupies residues 516–536; that stretch reads VYLLMGSFLLILVLVGLFIFF. The Cytoplasmic portion of the chain corresponds to 537-1276; it reads WRRYKLEQEL…EIPDFGEEFA (740 aa). Disordered stretches follow at residues 562-601 and 635-709; these read ESQK…NSDK and IFTR…KKSL. Residues 567–577 are compositionally biased toward basic residues; it reads NEKKKAKKRKN. 2 stretches are compositionally biased toward polar residues: residues 590 to 599 and 642 to 660; these read RSTSRSSVNS and TPPS…SLQK. Residues 717–1013 enclose the Protein kinase domain; that stretch reads SFGMVSFKSG…SSVRKAVRSL (297 aa). ATP-binding positions include 723-731 and K756; that span reads FKSGSGGSV. Residues 1017–1063 adopt a coiled-coil conformation; it reads NETSNLVDNLLKRMEQYANNLEGLVEERTQEYLAEKKKVEELLHQLL. The Guanylate cyclase domain maps to 1086–1215; the sequence is TIYFSDIVGF…DTVNTSSRME (130 aa). Mg(2+) contacts are provided by D1091, I1092, and D1135.

It belongs to the adenylyl cyclase class-4/guanylyl cyclase family. Expressed in head neurons, ventral cord and tail neurons, body wall muscle, hypodermis, somatic gonad and intestine. Isoform d is expressed specifically in AIA interneurons.

Its subcellular location is the cell membrane. It localises to the cell projection. The protein resides in the dendrite. The protein localises to the axon. It is found in the perikaryon. The catalysed reaction is GTP = 3',5'-cyclic GMP + diphosphate. Functionally, guanylate cyclase involved in the production of the second messenger cGMP. Regulates olfactory perception in AWC sensory neurons although may not be involved in the primary sensory transduction steps. In terms of biological role, isoforms c: Regulates sensory integration of conflicting sensory cues in AIA interneurons. Regulates sensory integration of conflicting sensory cues in AIA interneurons. This Caenorhabditis elegans protein is Receptor-type guanylate cyclase gcy-28.